The primary structure comprises 294 residues: 33 kDa chaperonin (294 aa).

2 disulfides stabilise this stretch: Cys236–Cys238 and Cys269–Cys272.

Belongs to the HSP33 family. Under oxidizing conditions two disulfide bonds are formed involving the reactive cysteines. Under reducing conditions zinc is bound to the reactive cysteines and the protein is inactive.

Its subcellular location is the cytoplasm. Its function is as follows. Redox regulated molecular chaperone. Protects both thermally unfolding and oxidatively damaged proteins from irreversible aggregation. Plays an important role in the bacterial defense system toward oxidative stress. The sequence is that of 33 kDa chaperonin from Desulforamulus reducens (strain ATCC BAA-1160 / DSM 100696 / MI-1) (Desulfotomaculum reducens).